The following is a 220-amino-acid chain: Ribose-5-phosphate isomerase A (220 aa).

Substrate is bound by residues 28-31, 81-84, and 94-97; these read TGST, DGAD, and KGGG. The active-site Proton acceptor is glutamate 103. Lysine 121 is a binding site for substrate.

Belongs to the ribose 5-phosphate isomerase family. As to quaternary structure, homodimer.

The catalysed reaction is aldehydo-D-ribose 5-phosphate = D-ribulose 5-phosphate. Its pathway is carbohydrate degradation; pentose phosphate pathway; D-ribose 5-phosphate from D-ribulose 5-phosphate (non-oxidative stage): step 1/1. Catalyzes the reversible conversion of ribose-5-phosphate to ribulose 5-phosphate. The sequence is that of Ribose-5-phosphate isomerase A from Shewanella baltica (strain OS223).